The following is a 351-amino-acid chain: Fe-S cluster assembly protein DRE2 (351 aa).

Residues 1–151 (MATTGRVLLL…KPDIGAQQAI (151 aa)) form an N-terminal SAM-like domain region. Disordered regions lie at residues 93 to 118 (RNRENKPWGLSDGNGSNANSSRRYND) and 157 to 186 (RRRKEKEKTDTLASSANYSTNGTVGAPSSN). Composition is skewed to polar residues over residues 105 to 114 (GNGSNANSSR) and 167 to 186 (TLASSANYSTNGTVGAPSSN). The segment at 152–243 (PLKLSRRRKE…EDELLDEDDM (92 aa)) is linker. [2Fe-2S] cluster-binding residues include Cys-253, Cys-264, Cys-267, and Cys-269. Positions 253–269 (CRPKPGKRRRACKDCSC) are fe-S binding site A. 4 residues coordinate [4Fe-4S] cluster: Cys-314, Cys-317, Cys-325, and Cys-328. 2 short sequence motifs (cx2C motif) span residues 314-317 (CGNC) and 325-328 (CDGC). Residues 314 to 328 (CGNCSLGDAFRCDGC) are fe-S binding site B.

The protein belongs to the anamorsin family. In terms of assembly, monomer. Interacts with TAH18. Interacts with MIA40. It depends on [2Fe-2S] cluster as a cofactor. Requires [4Fe-4S] cluster as cofactor.

It localises to the cytoplasm. The protein localises to the mitochondrion intermembrane space. Functionally, component of the cytosolic iron-sulfur (Fe-S) protein assembly (CIA) machinery required for the maturation of extramitochondrial Fe-S proteins. Part of an electron transfer chain functioning in an early step of cytosolic Fe-S biogenesis, facilitating the de novo assembly of a [4Fe-4S] cluster on the scaffold complex CFD1-NBP35. Electrons are transferred to DRE2 from NADPH via the FAD- and FMN-containing protein TAH18. TAH18-DRE2 are also required for the assembly of the diferric tyrosyl radical cofactor of ribonucleotide reductase (RNR), probably by providing electrons for reduction during radical cofactor maturation in the catalytic small subunit RNR2. This chain is Fe-S cluster assembly protein DRE2, found in Ajellomyces capsulatus (strain NAm1 / WU24) (Darling's disease fungus).